Here is an 87-residue protein sequence, read N- to C-terminus: Large ribosomal subunit protein bL27 (87 aa).

It belongs to the bacterial ribosomal protein bL27 family.

In Dechloromonas aromatica (strain RCB), this protein is Large ribosomal subunit protein bL27.